The sequence spans 461 residues: Cysteine--tRNA ligase (461 aa).

Position 30 (Cys-30) interacts with Zn(2+). The short motif at 32-42 is the 'HIGH' region element; that stretch reads PTVYSYAHIGN. 3 residues coordinate Zn(2+): Cys-212, His-237, and Glu-241. Positions 270 to 274 match the 'KMSKS' region motif; the sequence is KMSKS. Lys-273 contacts ATP.

The protein belongs to the class-I aminoacyl-tRNA synthetase family. In terms of assembly, monomer. Zn(2+) is required as a cofactor.

It is found in the cytoplasm. It catalyses the reaction tRNA(Cys) + L-cysteine + ATP = L-cysteinyl-tRNA(Cys) + AMP + diphosphate. This Maricaulis maris (strain MCS10) (Caulobacter maris) protein is Cysteine--tRNA ligase.